We begin with the raw amino-acid sequence, 248 residues long: Adenosylcobinamide-GDP ribazoletransferase (248 aa).

7 helical membrane-spanning segments follow: residues 24–44 (EINL…IGAW), 70–90 (IIIT…GLFS), 106–126 (VGAN…ALFL), 134–154 (IGWL…LLFA), 168–188 (IFLG…LVAL), 189–209 (GAFF…FTII), and 228–248 (AGGQ…WGLI).

It belongs to the CobS family. Mg(2+) serves as cofactor.

Its subcellular location is the cell membrane. The catalysed reaction is alpha-ribazole + adenosylcob(III)inamide-GDP = adenosylcob(III)alamin + GMP + H(+). The enzyme catalyses alpha-ribazole 5'-phosphate + adenosylcob(III)inamide-GDP = adenosylcob(III)alamin 5'-phosphate + GMP + H(+). It participates in cofactor biosynthesis; adenosylcobalamin biosynthesis; adenosylcobalamin from cob(II)yrinate a,c-diamide: step 7/7. Functionally, joins adenosylcobinamide-GDP and alpha-ribazole to generate adenosylcobalamin (Ado-cobalamin). Also synthesizes adenosylcobalamin 5'-phosphate from adenosylcobinamide-GDP and alpha-ribazole 5'-phosphate. The protein is Adenosylcobinamide-GDP ribazoletransferase of Listeria monocytogenes serotype 4a (strain HCC23).